Here is a 76-residue protein sequence, read N- to C-terminus: MAMTQVFVIFILLATSLCNSNALPSSVINGFGYDYCIVECSITFLDDACKPLCIDRGYSDGGCIGLSPHFKCCCKK.

The first 22 residues, 1 to 22 (MAMTQVFVIFILLATSLCNSNA), serve as a signal peptide directing secretion. Disulfide bonds link cysteine 36–cysteine 74, cysteine 40–cysteine 63, cysteine 49–cysteine 72, and cysteine 53–cysteine 73.

This sequence belongs to the DEFL family.

The protein resides in the secreted. This is Defensin-like protein 71 (LCR84) from Arabidopsis thaliana (Mouse-ear cress).